The primary structure comprises 1135 residues: APC membrane recruitment protein 1 (1135 aa).

Methionine 1 bears the N-acetylmethionine mark. 7 disordered regions span residues 1–115 (METQ…EGTG), 156–308 (AEKF…VGDP), 339–405 (SMTD…EDDD), 447–484 (GLAPGELLTPQSDQQESAPNSDEGYYDSTTPGFEDDSG), 736–764 (NFGGSPRRAYPTYSPPEDPEEEEVEKEGN), 921–948 (LQAQQEDSDEEDEEEEEGEWSRDSPLSL), and 1007–1135 (VPES…NLAK). Low complexity predominate over residues 10–19 (QAKGAAASGS). Residues 23–35 (QTAEKGAKNKAAE) are compositionally biased toward basic and acidic residues. Residues 36–50 (ATEGPTSEPSSSGPG) show a composition bias toward low complexity. A compositionally biased stretch (gly residues) spans 73 to 83 (FGGGRSKGSGK). Composition is skewed to basic and acidic residues over residues 94–107 (KTHDGLSEAAHGPE) and 196–208 (GPERVRARPHEHV). Over residues 238–248 (KVSPTPEPSPP) the composition is skewed to pro residues. Position 246 is a phosphoserine (serine 246). Composition is skewed to basic and acidic residues over residues 253–262 (MACKDPEKPM) and 282–291 (EEPHSPETGE). Acidic residues predominate over residues 373 to 405 (ALPDDDDEEEEEEEEVELEEEEEEVKEEEEDDD). Residues 455–466 (TPQSDQQESAPN) show a composition bias toward polar residues. Positions 926-938 (EDSDEEDEEEEEG) are enriched in acidic residues. Positions 1058–1069 (PSCSSSSGGFSP) are enriched in low complexity. Residues 1119–1135 (SLATSYSSTAMNGNLAK) are compositionally biased toward polar residues.

Belongs to the Amer family. In terms of assembly, interacts with CTNNB1, AXIN1, LRP6, KEAP1, APC and BTRC. Interacts with SCF (SKP1-CUL1-F-box protein) E3 ubiquitin-protein ligase complexes containing BTRC and/or FBXW11. Identified in the beta-catenin destruction complex containing CTNNB1, APC, AXIN1 and AXIN2. Interacts with WT1. In terms of tissue distribution, detected in fetal and adult kidney, brain and spleen.

It localises to the cytoplasm. It is found in the cell membrane. Its subcellular location is the nucleus. Regulator of the canonical Wnt signaling pathway. Acts by specifically binding phosphatidylinositol 4,5-bisphosphate (PtdIns(4,5)P2), translocating to the cell membrane and interacting with key regulators of the canonical Wnt signaling pathway, such as components of the beta-catenin destruction complex. Acts both as a positive and negative regulator of the Wnt signaling pathway, depending on the context: acts as a positive regulator by promoting LRP6 phosphorylation. Also acts as a negative regulator by acting as a scaffold protein for the beta-catenin destruction complex and promoting stabilization of Axin at the cell membrane. Promotes CTNNB1 ubiquitination and degradation. Involved in kidney development. The sequence is that of APC membrane recruitment protein 1 (AMER1) from Homo sapiens (Human).